Consider the following 508-residue polypeptide: ATP synthase subunit alpha, chloroplastic (508 aa).

Residue 172-179 (GDRQTGKT) participates in ATP binding.

Belongs to the ATPase alpha/beta chains family. As to quaternary structure, F-type ATPases have 2 components, CF(1) - the catalytic core - and CF(0) - the membrane proton channel. CF(1) has five subunits: alpha(3), beta(3), gamma(1), delta(1), epsilon(1). CF(0) has four main subunits: a, b, b' and c.

Its subcellular location is the plastid. It localises to the chloroplast thylakoid membrane. It catalyses the reaction ATP + H2O + 4 H(+)(in) = ADP + phosphate + 5 H(+)(out). In terms of biological role, produces ATP from ADP in the presence of a proton gradient across the membrane. The alpha chain is a regulatory subunit. The polypeptide is ATP synthase subunit alpha, chloroplastic (Psilotum nudum (Whisk fern)).